Consider the following 496-residue polypeptide: Ribose import ATP-binding protein RbsA (496 aa).

2 ABC transporter domains span residues 5–241 (LQMK…VGRE) and 252–496 (SPGE…VGGE). An ATP-binding site is contributed by 37–44 (GENGAGKS).

It belongs to the ABC transporter superfamily. Ribose importer (TC 3.A.1.2.1) family. The complex is composed of an ATP-binding protein (RbsA), two transmembrane proteins (RbsC) and a solute-binding protein (RbsB).

Its subcellular location is the cell membrane. It carries out the reaction D-ribose(out) + ATP + H2O = D-ribose(in) + ADP + phosphate + H(+). Its function is as follows. Part of the ABC transporter complex RbsABC involved in ribose import. Responsible for energy coupling to the transport system. The sequence is that of Ribose import ATP-binding protein RbsA from Caldanaerobacter subterraneus subsp. tengcongensis (strain DSM 15242 / JCM 11007 / NBRC 100824 / MB4) (Thermoanaerobacter tengcongensis).